Here is a 408-residue protein sequence, read N- to C-terminus: Exodeoxyribonuclease 7 large subunit (408 aa).

Belongs to the XseA family. As to quaternary structure, heterooligomer composed of large and small subunits.

It is found in the cytoplasm. The catalysed reaction is Exonucleolytic cleavage in either 5'- to 3'- or 3'- to 5'-direction to yield nucleoside 5'-phosphates.. In terms of biological role, bidirectionally degrades single-stranded DNA into large acid-insoluble oligonucleotides, which are then degraded further into small acid-soluble oligonucleotides. The polypeptide is Exodeoxyribonuclease 7 large subunit (Alkaliphilus oremlandii (strain OhILAs) (Clostridium oremlandii (strain OhILAs))).